Reading from the N-terminus, the 171-residue chain is Large ribosomal subunit protein bL9 (171 aa).

Belongs to the bacterial ribosomal protein bL9 family.

In terms of biological role, binds to the 23S rRNA. The sequence is that of Large ribosomal subunit protein bL9 from Rickettsia conorii (strain ATCC VR-613 / Malish 7).